A 248-amino-acid chain; its full sequence is 3-deoxy-manno-octulosonate cytidylyltransferase (248 aa).

This sequence belongs to the KdsB family.

It is found in the cytoplasm. It carries out the reaction 3-deoxy-alpha-D-manno-oct-2-ulosonate + CTP = CMP-3-deoxy-beta-D-manno-octulosonate + diphosphate. It participates in nucleotide-sugar biosynthesis; CMP-3-deoxy-D-manno-octulosonate biosynthesis; CMP-3-deoxy-D-manno-octulosonate from 3-deoxy-D-manno-octulosonate and CTP: step 1/1. The protein operates within bacterial outer membrane biogenesis; lipopolysaccharide biosynthesis. Its function is as follows. Activates KDO (a required 8-carbon sugar) for incorporation into bacterial lipopolysaccharide in Gram-negative bacteria. The sequence is that of 3-deoxy-manno-octulosonate cytidylyltransferase from Photobacterium profundum (strain SS9).